The chain runs to 3707 residues: CUB and sushi domain-containing protein 3 (3707 aa).

Basic and acidic residues predominate over residues 1–21 (MKGSRKGESRAKESKPREPGT). The disordered stretch occupies residues 1-22 (MKGSRKGESRAKESKPREPGTR). Residues 1–42 (MKGSRKGESRAKESKPREPGTRRCAKCGRLDFILKKKMGIKS) lie on the Cytoplasmic side of the membrane. Residues 43–63 (GFTFWNLVFLLTLSCVKGFIY) traverse the membrane as a helical segment. Residues 64 to 3630 (TCGGTLKGLN…NQPHGTNSSS (3567 aa)) are Extracellular-facing. 4 disulfides stabilise this stretch: C65–C91, C178–C218, C204–C235, and C241–C267. Residues 65–173 (CGGTLKGLNG…HGFKVYYEEL (109 aa)) form the CUB 1 domain. Residues N73 and N90 are each glycosylated (N-linked (GlcNAc...) asparagine). The Sushi 1 domain maps to 176 to 237 (SSCGNPGVPP…WDFPVPICRA (62 aa)). The 105-residue stretch at 241–345 (CGGTMRGSSG…RGFSAPYQGS (105 aa)) folds into the CUB 2 domain. Residues 388 to 437 (HRLSEEQRVQVRSLSDSGLDPNTPEDQLSPHQADTQSTSRRPRNAEQIER) are disordered. Positions 411 to 426 (PEDQLSPHQADTQSTS) are enriched in polar residues. Positions 484 to 545 (NLCPDPGEPE…WSDHRPVCKV (62 aa)) constitute a Sushi 2 domain. Disulfide bonds link C486-C526, C512-C543, C548-C574, C664-C704, C690-C717, and C721-C747. The 112-residue stretch at 548–659 (CGSNLQGPSG…VGFKVNYKEI (112 aa)) folds into the CUB 3 domain. Positions 662 to 719 (ESCGDPGTPLYGIREGDGFSNRDVLRFECQFGFELIGEKSIVCQENNQWSANIPICIF) constitute a Sushi 3 domain. One can recognise a CUB 4 domain in the interval 721–829 (CLSNFTAPMG…RGFNITYNTF (109 aa)). N-linked (GlcNAc...) asparagine glycans are attached at residues N724 and N823. One can recognise a Sushi 4 domain in the interval 832–893 (NECPDPGIPI…WSGPIPRCGA (62 aa)). 3 cysteine pairs are disulfide-bonded: C834-C875, C860-C891, and C895-C921. The CUB 5 domain maps to 895–1003 (CGGHFSAPSG…NGFKIHYESV (109 aa)). N-linked (GlcNAc...) asparagine glycosylation occurs at N966. One can recognise a Sushi 5 domain in the interval 1008–1065 (YSCLDPGIPVHGRRYGHDFSIGSTVSFSCDPGYRLSHEEPLLCEKNHWWSHPLPTCDA). Intrachain disulfides connect C1010-C1050, C1036-C1063, and C1067-C1093. The CUB 6 domain occupies 1067–1177 (CGGDVRGPSG…EGFNITFSEY (111 aa)). 3 N-linked (GlcNAc...) asparagine glycosylation sites follow: N1092, N1126, and N1171. Positions 1180 to 1239 (EPCEDPGIPQYGSRVGFSFGVGDTLTFSCSLGYRLEGSSEIICLGGGRRVWSAPLPRCVA) constitute a Sushi 6 domain. 3 disulfide bridges follow: C1182-C1222, C1208-C1237, and C1241-C1267. Residues 1241 to 1349 (CGASATNNEG…EGFQLVYTSF (109 aa)) enclose the CUB 7 domain. N1280 is a glycosylation site (N-linked (GlcNAc...) asparagine). The 61-residue stretch at 1352-1412 (SHCEDPGIPQ…WDYPLPSCIA (61 aa)) folds into the Sushi 7 domain. Intrachain disulfides connect C1354–C1395, C1381–C1410, C1414–C1441, C1528–C1568, C1554–C1584, C1588–C1614, C1701–C1741, C1727–C1758, C1762–C1788, C1878–C1918, C1904–C1935, and C1939–C1965. Residues 1414–1523 (CGGRFKGESS…SGFAIQFSSS (110 aa)) form the CUB 8 domain. Residues 1526 to 1586 (TACRDPGVPM…WQPSPPVCIA (61 aa)) enclose the Sushi 8 domain. The N-linked (GlcNAc...) asparagine glycan is linked to N1536. The CUB 9 domain maps to 1588–1696 (CGGNLTGSSG…TGFHLEYKAK (109 aa)). Residues N1591 and N1709 are each glycosylated (N-linked (GlcNAc...) asparagine). Positions 1699–1760 (ESCFDPGNIM…WNRVLPSCHA (62 aa)) constitute a Sushi 9 domain. The CUB 10 domain maps to 1762–1870 (CGSRSTGSEG…KGFHFVYQAV (109 aa)). N-linked (GlcNAc...) asparagine glycosylation is present at N1781. Residues 1876-1937 (TQCSSVPEPR…WNDSLPTCIV (62 aa)) enclose the Sushi 10 domain. N-linked (GlcNAc...) asparagine glycosylation occurs at N1929. The region spanning 1939–2047 (CGGILTKRKG…AGFHLEYTAI (109 aa)) is the CUB 11 domain. A glycan (N-linked (GlcNAc...) asparagine) is linked at N2019. In terms of domain architecture, Sushi 11 spans 2050-2109 (DSCPEPQTPSSGIKVGDRYMVGDVVSFQCDQGYSLQGHSHITCMPGPVRRWNYPIPICLA). Disulfide bonds link C2052–C2092, C2078–C2107, and C2111–C2137. In terms of domain architecture, CUB 12 spans 2111–2219 (CGGAMSDFSG…QGFHIVYQAY (109 aa)). The N-linked (GlcNAc...) asparagine glycan is linked to N2155. A Sushi 12 domain is found at 2222–2281 (QSCPDPRPFRNGFVIGNDFTVGQTISFECFPGYTLIGNSALTCLHGVSRNWNHPLPRCEA). 36 cysteine pairs are disulfide-bonded: C2224-C2264, C2250-C2279, C2283-C2309, C2395-C2437, C2423-C2452, C2456-C2484, C2569-C2610, C2596-C2627, C2632-C2674, C2658-C2689, C2694-C2739, C2725-C2754, C2759-C2799, C2785-C2812, C2817-C2857, C2843-C2870, C2875-C2915, C2901-C2928, C2933-C2977, C2963-C2990, C2995-C3035, C3021-C3048, C3056-C3096, C3082-C3109, C3114-C3155, C3141-C3168, C3173-C3215, C3199-C3228, C3233-C3273, C3259-C3286, C3291-C3331, C3317-C3344, C3352-C3393, C3379-C3406, C3411-C3453, and C3438-C3466. Residues 2283–2394 (CGGNITAMNG…LSYHAYQLRV (112 aa)) enclose the CUB 13 domain. N-linked (GlcNAc...) asparagine glycosylation is found at N2286 and N2291. The Sushi 13 domain maps to 2393 to 2454 (RVCQPPPPVP…MDGAPPVCQV (62 aa)). A CUB 14 domain is found at 2456–2567 (CPANELRLDS…KGFRIRYIAF (112 aa)). Sushi domains are found at residues 2567 to 2629 (FYCS…ACQA), 2630 to 2691 (ISCG…RCVV), 2692 to 2756 (VTCP…YCQI), 2757 to 2814 (ISCG…RCLA), 2815 to 2872 (GHCG…SCVP), 2873 to 2930 (VSCG…VCKV), 2931 to 2992 (VNCS…ECIM), 2993 to 3050 (IDCG…HCSG), 3054 to 3111 (GTCG…ECKA), 3112 to 3170 (VQCG…NCTI), 3171 to 3230 (ISCG…TCRA), 3231 to 3288 (VTCS…QCLP), 3289 to 3346 (KFCG…HCIE), 3350 to 3408 (TSCE…ECIP), and 3409 to 3468 (HSCK…VCEA). Residues 3052-3065 (TTGTCGDPGTPGHG) are compositionally biased toward low complexity. The disordered stretch occupies residues 3052-3071 (TTGTCGDPGTPGHGSRQESD). Residues 3631–3651 (VAIAILVPFFALIFAGFGFYL) form a helical membrane-spanning segment. At 3652 to 3707 (YKQRTAPKTQYTGCSVHENNNGQAAFENPMYDTNAKSVEGKAVRFDPNLNTVCTMV) the chain is on the cytoplasmic side.

Belongs to the CSMD family. As to expression, expressed in the apical dendrites of postnatal hippocampal neurons (at protein level).

Its subcellular location is the cell membrane. Its function is as follows. Involved in dendrite development. The protein is CUB and sushi domain-containing protein 3 (Csmd3) of Mus musculus (Mouse).